Consider the following 172-residue polypeptide: Melanocortin-2 receptor accessory protein (172 aa).

Residues 38-58 (IVIAFWVSLAAFVVLLFLILL) form a helical membrane-spanning segment. Disordered regions lie at residues 105 to 130 (QAQASSVEPGSRTGPDQPLRQESSST) and 152 to 172 (PLVRSKPSEPPPGDRTSQLQS).

This sequence belongs to the MRAP family. In terms of assembly, homodimer and heterodimer. Forms antiparallel homodimers and heterodimers with MRAP2. Interacts with MC1R, MC2R, MC3R, MC4R and MC5R.

The protein resides in the cell membrane. The protein localises to the endoplasmic reticulum membrane. In terms of biological role, modulator of melanocortin receptors (MC1R, MC2R, MC3R, MC4R and MC5R). Acts by increasing ligand-sensitivity of melanocortin receptors and enhancing generation of cAMP by the receptors. Required both for MC2R trafficking to the cell surface of adrenal cells and for signaling in response to corticotropin (ACTH). May be involved in the intracellular trafficking pathways in adipocyte cells. This chain is Melanocortin-2 receptor accessory protein (MRAP), found in Pan troglodytes (Chimpanzee).